Reading from the N-terminus, the 631-residue chain is 1-deoxy-D-xylulose-5-phosphate synthase (631 aa).

Residues His73 and 114 to 116 (SHA) each bind thiamine diphosphate. Position 145 (Asp145) interacts with Mg(2+). Residues 146-147 (GA), Asn175, Tyr286, and Glu368 each bind thiamine diphosphate. Asn175 contacts Mg(2+).

Belongs to the transketolase family. DXPS subfamily. Homodimer. The cofactor is Mg(2+). Thiamine diphosphate serves as cofactor.

It carries out the reaction D-glyceraldehyde 3-phosphate + pyruvate + H(+) = 1-deoxy-D-xylulose 5-phosphate + CO2. It participates in metabolic intermediate biosynthesis; 1-deoxy-D-xylulose 5-phosphate biosynthesis; 1-deoxy-D-xylulose 5-phosphate from D-glyceraldehyde 3-phosphate and pyruvate: step 1/1. In terms of biological role, catalyzes the acyloin condensation reaction between C atoms 2 and 3 of pyruvate and glyceraldehyde 3-phosphate to yield 1-deoxy-D-xylulose-5-phosphate (DXP). The protein is 1-deoxy-D-xylulose-5-phosphate synthase of Nocardia farcinica (strain IFM 10152).